The chain runs to 503 residues: Na(+)-translocating NADH-quinone reductase subunit B (503 aa).

The next 5 helical transmembrane spans lie at 55 to 75 (MMLVVIALMPTVFVAIWNSGL), 85 to 105 (PQIMEAFLHISGFTSYFSFVS), 120 to 142 (IFLPLLFISYAVGGTCEVLFAII), 161 to 181 (ILPPTIPYWMAALGIAFGVVI), and 186 to 206 (FGGTGMNILNPALTGRAFLFF). The residue at position 248 (T248) is an FMN phosphoryl threonine. 5 helical membrane passes run 361–381 (TSTVACLLGAGLLLLTGIASW), 387–407 (FGLSSLFFAWLFKIISILAAG), 417–437 (FFIPVYRHLFIGGLAFGLVFM), 452–472 (WFYGAFIGFLTILIRLINPAY), and 475–495 (GVMLAILLGNVFAPSFDRIAL).

The protein belongs to the NqrB/RnfD family. As to quaternary structure, composed of six subunits; NqrA, NqrB, NqrC, NqrD, NqrE and NqrF. FMN serves as cofactor.

Its subcellular location is the cell inner membrane. The catalysed reaction is a ubiquinone + n Na(+)(in) + NADH + H(+) = a ubiquinol + n Na(+)(out) + NAD(+). Functionally, NQR complex catalyzes the reduction of ubiquinone-1 to ubiquinol by two successive reactions, coupled with the transport of Na(+) ions from the cytoplasm to the periplasm. NqrA to NqrE are probably involved in the second step, the conversion of ubisemiquinone to ubiquinol. This Chlamydia muridarum (strain MoPn / Nigg) protein is Na(+)-translocating NADH-quinone reductase subunit B.